The chain runs to 287 residues: N-methyltransferase verN (287 aa).

Belongs to the methyltransferase superfamily. LaeA methyltransferase family.

It functions in the pathway mycotoxin biosynthesis. N-methyltransferase; part of the gene cluster that mediates the biosynthesis of 11'-deoxyverticillin A, one of the dimeric epipolythiodioxopiperazines (ETPs) from the verticillin family that act as mycotoxins. 11'-deoxyverticillin A is required for normal conidiation. The nonribosomal peptide synthetase verP is speculated to be responsible for condensation of amino acids to form the carbon skeleton of verticillin, whereas the cluster-specific tailoring enzymes are involved in further modifications leading to the production of 11'-deoxyverticillin A. This is N-methyltransferase verN from Clonostachys rogersoniana.